The sequence spans 195 residues: Imidazoleglycerol-phosphate dehydratase (195 aa).

It belongs to the imidazoleglycerol-phosphate dehydratase family.

The protein resides in the cytoplasm. The catalysed reaction is D-erythro-1-(imidazol-4-yl)glycerol 3-phosphate = 3-(imidazol-4-yl)-2-oxopropyl phosphate + H2O. It functions in the pathway amino-acid biosynthesis; L-histidine biosynthesis; L-histidine from 5-phospho-alpha-D-ribose 1-diphosphate: step 6/9. In Geobacter sulfurreducens (strain ATCC 51573 / DSM 12127 / PCA), this protein is Imidazoleglycerol-phosphate dehydratase.